Reading from the N-terminus, the 189-residue chain is Protein GrpE (189 aa).

Residues 1-38 show a composition bias toward basic and acidic residues; the sequence is MTKSNETERMEESEETHSSDIRSASESDHASGSDHTES. A disordered region spans residues 1–54; sequence MTKSNETERMEESEETHSSDIRSASESDHASGSDHTESADEIPTADAEQGELEQ.

The protein belongs to the GrpE family. As to quaternary structure, homodimer.

It is found in the cytoplasm. In terms of biological role, participates actively in the response to hyperosmotic and heat shock by preventing the aggregation of stress-denatured proteins, in association with DnaK and GrpE. It is the nucleotide exchange factor for DnaK and may function as a thermosensor. Unfolded proteins bind initially to DnaJ; upon interaction with the DnaJ-bound protein, DnaK hydrolyzes its bound ATP, resulting in the formation of a stable complex. GrpE releases ADP from DnaK; ATP binding to DnaK triggers the release of the substrate protein, thus completing the reaction cycle. Several rounds of ATP-dependent interactions between DnaJ, DnaK and GrpE are required for fully efficient folding. The protein is Protein GrpE of Tropheryma whipplei (strain TW08/27) (Whipple's bacillus).